We begin with the raw amino-acid sequence, 322 residues long: Phosphatidylserine decarboxylase proenzyme (322 aa).

Catalysis depends on charge relay system; for autoendoproteolytic cleavage activity residues aspartate 90, histidine 147, and serine 254. Residue serine 254 is the Schiff-base intermediate with substrate; via pyruvic acid; for decarboxylase activity of the active site. Serine 254 bears the Pyruvic acid (Ser); by autocatalysis mark. Positions 294–322 (EAEPAPLPEEEINAEHDASPLVDDKKDES) are disordered. Residues 306-322 (NAEHDASPLVDDKKDES) show a composition bias toward basic and acidic residues.

It belongs to the phosphatidylserine decarboxylase family. PSD-B subfamily. Prokaryotic type I sub-subfamily. As to quaternary structure, heterodimer of a large membrane-associated beta subunit and a small pyruvoyl-containing alpha subunit. Pyruvate is required as a cofactor. Post-translationally, is synthesized initially as an inactive proenzyme. Formation of the active enzyme involves a self-maturation process in which the active site pyruvoyl group is generated from an internal serine residue via an autocatalytic post-translational modification. Two non-identical subunits are generated from the proenzyme in this reaction, and the pyruvate is formed at the N-terminus of the alpha chain, which is derived from the carboxyl end of the proenzyme. The autoendoproteolytic cleavage occurs by a canonical serine protease mechanism, in which the side chain hydroxyl group of the serine supplies its oxygen atom to form the C-terminus of the beta chain, while the remainder of the serine residue undergoes an oxidative deamination to produce ammonia and the pyruvoyl prosthetic group on the alpha chain. During this reaction, the Ser that is part of the protease active site of the proenzyme becomes the pyruvoyl prosthetic group, which constitutes an essential element of the active site of the mature decarboxylase.

It is found in the cell membrane. It catalyses the reaction a 1,2-diacyl-sn-glycero-3-phospho-L-serine + H(+) = a 1,2-diacyl-sn-glycero-3-phosphoethanolamine + CO2. The protein operates within phospholipid metabolism; phosphatidylethanolamine biosynthesis; phosphatidylethanolamine from CDP-diacylglycerol: step 2/2. In terms of biological role, catalyzes the formation of phosphatidylethanolamine (PtdEtn) from phosphatidylserine (PtdSer). This is Phosphatidylserine decarboxylase proenzyme from Citrobacter koseri (strain ATCC BAA-895 / CDC 4225-83 / SGSC4696).